A 152-amino-acid polypeptide reads, in one-letter code: Nucleoplasmin-like protein (152 aa).

Over residues 109–128 (EVVDMEEDDEEDDVAEDEED) the composition is skewed to acidic residues. Residues 109 to 152 (EVVDMEEDDEEDDVAEDEEDEHPKKRAKIENAADGKNAKNNKKK) are disordered. Over residues 136–145 (KIENAADGKN) the composition is skewed to basic and acidic residues.

This sequence belongs to the nucleoplasmin family. In terms of assembly, decamer formed by two pentameric rings associated in a head-to-head fashion.

It is found in the nucleus. Its function is as follows. Binds to core histones and functions in the ATP-facilitated assembly of approximately regularly spaced nucleosomal arrays. May participate in parallel with other histone-binding proteins such as NAP-1. Functionally, inactive for chromatin assembly. In vitro it appears to form a high molecular mass aggregate with the core histones. This chain is Nucleoplasmin-like protein (Nlp), found in Drosophila melanogaster (Fruit fly).